Consider the following 81-residue polypeptide: Short neurotoxin D (81 aa).

An N-terminal signal peptide occupies residues 1–21; it reads MKTLLLTLVVVTIVCLDLGYT. 4 cysteine pairs are disulfide-bonded: Cys24/Cys43, Cys38/Cys60, Cys62/Cys73, and Cys74/Cys79.

It belongs to the three-finger toxin family. Short-chain subfamily. Type I alpha-neurotoxin sub-subfamily. In terms of tissue distribution, expressed by the venom gland.

Its subcellular location is the secreted. Its function is as follows. Binds to muscle nicotinic acetylcholine receptor (nAChR) and inhibit acetylcholine from binding to the receptor, thereby impairing neuromuscular transmission. The chain is Short neurotoxin D from Aipysurus laevis (Olive sea snake).